A 112-amino-acid chain; its full sequence is MNYPKREKVVEVSLASGTYSVFPRRLGVTTNDAMSIVNGAMKGAELPMIPVHKLADRDSELTYVNAFQIQTATENIVDVPERITSLYTKPEDETPEDEEVRLGTINNYFSLR.

The protein localises to the virion. The polypeptide is Virion protein 6 (Enterococcus phage phiEF24C (Enterococcus bacteriophage phi-EF24C)).